The chain runs to 127 residues: Aspartate 1-decarboxylase (127 aa).

The Schiff-base intermediate with substrate; via pyruvic acid role is filled by serine 25. Serine 25 carries the post-translational modification Pyruvic acid (Ser). Substrate is bound at residue threonine 57. Tyrosine 58 functions as the Proton donor in the catalytic mechanism. A substrate-binding site is contributed by 73-75 (GAA).

This sequence belongs to the PanD family. Heterooctamer of four alpha and four beta subunits. The cofactor is pyruvate. Post-translationally, is synthesized initially as an inactive proenzyme, which is activated by self-cleavage at a specific serine bond to produce a beta-subunit with a hydroxyl group at its C-terminus and an alpha-subunit with a pyruvoyl group at its N-terminus.

Its subcellular location is the cytoplasm. The catalysed reaction is L-aspartate + H(+) = beta-alanine + CO2. It functions in the pathway cofactor biosynthesis; (R)-pantothenate biosynthesis; beta-alanine from L-aspartate: step 1/1. Catalyzes the pyruvoyl-dependent decarboxylation of aspartate to produce beta-alanine. This Listeria welshimeri serovar 6b (strain ATCC 35897 / DSM 20650 / CCUG 15529 / CIP 8149 / NCTC 11857 / SLCC 5334 / V8) protein is Aspartate 1-decarboxylase.